The following is a 466-amino-acid chain: MADQFYLENIDEFVTDQNKIVTYKWLSYTLGVHVNQAKQMLYDYVERKRKENSGAQLHVTYLVSGSLIQNGHSCHKVAVVREDKLEAVKSKLAVTASVHVYSIQKAMLKDSGPLFNTDYDILKSNLQNCSKFSAIQCAAAVPRAPAESSSSEKLEQSDPPVSPEMQASDELTTNGHGPPVPKQSSQQPKGIMGMFASKAASKAQDANKETKTEAKEVMNSEKNNENLLLSGYWESMIVLFQAQCINKLKVNLDSEQEVKEEKKVEQPPLSVTEPKLAAPVDLKKSSKKAEPVRMQQKEKKRRKQMELSDDETKETENMKKKRRRIKLPESDSSEDEVIPDSPGAYEAESPSPPPPSPSPEPVLKTEPEPPPVKGSDGENKRKRKRVLKSKTFTDEEGCMVTEKVYESESCTDSEEELKMKTSSVHRPPAMAVKKEPKEERKGPKKGTAAMGKANRQVAITGFFQRK.

An N-acetylalanine modification is found at A2. Disordered regions lie at residues 145–218 (PAES…KEVM) and 255–466 (EQEV…FQRK). 3 stretches are compositionally biased toward basic and acidic residues: residues 205–218 (DANK…KEVM), 255–265 (EQEVKEEKKVE), and 281–297 (DLKK…MQQK). K259 is covalently cross-linked (Glycyl lysine isopeptide (Lys-Gly) (interchain with G-Cter in SUMO); alternate). K259 participates in a covalent cross-link: Glycyl lysine isopeptide (Lys-Gly) (interchain with G-Cter in SUMO2); alternate. K262 is covalently cross-linked (Glycyl lysine isopeptide (Lys-Gly) (interchain with G-Cter in SUMO2)). S308 is subject to Phosphoserine. Residues 350–360 (PSPPPPSPSPE) show a composition bias toward pro residues. Phosphoserine occurs at positions 407 and 409. T411 is subject to Phosphothreonine. S413 bears the Phosphoserine mark. A compositionally biased stretch (basic and acidic residues) spans 432–441 (VKKEPKEERK). A Glycyl lysine isopeptide (Lys-Gly) (interchain with G-Cter in SUMO); alternate cross-link involves residue K433. Residue K433 forms a Glycyl lysine isopeptide (Lys-Gly) (interchain with G-Cter in SUMO2); alternate linkage. Residues 456–463 (QVAITGFF) carry the PIP-box motif.

As to quaternary structure, component of both the DNA polymerase delta and DNA polymerase zeta complexes. The tetrameric DNA polymerase delta complex (Pol-delta4), which consists of POLD1/p125, POLD2/p50, POLD3/p66/p68 and POLD4/p12, with POLD1 bearing DNA polymerase and 3' to 5' proofreading exonuclease activities. Within this complex, directly interacts with POLD2. Following stress caused by DNA damaging agents or by replication stress, POLD4 is degraded and Pol-delta4 is converted into a trimeric form of the complex (Pol-delta3), which consists of POLD1, POLD2 and POLD3. Pol-delta3 is the major form occurring at S phase replication sites, as well as DNA damage sites. Directly interacts with PCNA, as do POLD1 and POLD4; this interaction stimulates Pol-delta polymerase activity. Component of the DNA polymerase zeta complex (POLZ), which consists of REV3L, MAD2L2, POLD2 and POLD3, with REV3L bearing DNA polymerase catalytic activity. The DNA polymerase delta complex interacts with POLDIP2; this interaction is probably mediated through direct binding to POLD2. In terms of processing, ubiquitinated, but not targeted to the proteasome. Sumoylated. Sumoylation by SUMO3 may be predominant.

Its subcellular location is the cytoplasm. The protein resides in the nucleus. Its function is as follows. Accessory component of both the DNA polymerase delta complex and the DNA polymerase zeta complex. As a component of the trimeric and tetrameric DNA polymerase delta complexes (Pol-delta3 and Pol-delta4, respectively), plays a role in high fidelity genome replication, including in lagging strand synthesis, and repair. Required for optimal Pol-delta activity. Stabilizes the Pol-delta complex and plays a major role in Pol-delta stimulation by PCNA. Pol-delta3 and Pol-delta4 are characterized by the absence or the presence of POLD4. They exhibit differences in catalytic activity. Most notably, Pol-delta3 shows higher proofreading activity than Pol-delta4. Although both Pol-delta3 and Pol-delta4 process Okazaki fragments in vitro, Pol-delta3 may also be better suited to fulfill this task, exhibiting near-absence of strand displacement activity compared to Pol-delta4 and stalling on encounter with the 5'-blocking oligonucleotides. Pol-delta3 idling process may avoid the formation of a gap, while maintaining a nick that can be readily ligated. Along with DNA polymerase kappa, DNA polymerase delta carries out approximately half of nucleotide excision repair (NER) synthesis following UV irradiation. In this context, POLD3, along with PCNA and RFC1-replication factor C complex, is required to recruit POLD1, the catalytic subunit of the polymerase delta complex, to DNA damage sites. Under conditions of DNA replication stress, required for the repair of broken replication forks through break-induced replication (BIR). Involved in the translesion synthesis (TLS) of templates carrying O6-methylguanine or abasic sites performed by Pol-delta4, independently of DNA polymerase zeta (REV3L) or eta (POLH). Facilitates abasic site bypass by DNA polymerase delta by promoting extension from the nucleotide inserted opposite the lesion. Also involved in TLS, as a component of the tetrameric DNA polymerase zeta complex. Along with POLD2, dramatically increases the efficiency and processivity of DNA synthesis of the DNA polymerase zeta complex compared to the minimal zeta complex, consisting of only REV3L and REV7. The chain is DNA polymerase delta subunit 3 (POLD3) from Bos taurus (Bovine).